Reading from the N-terminus, the 231-residue chain is Small ribosomal subunit protein uS3 (231 aa).

The 80-residue stretch at V18–A97 folds into the KH type-2 domain.

The protein belongs to the universal ribosomal protein uS3 family. As to quaternary structure, part of the 30S ribosomal subunit.

Functionally, binds the lower part of the 30S subunit head. The sequence is that of Small ribosomal subunit protein uS3 from Sulfolobus acidocaldarius (strain ATCC 33909 / DSM 639 / JCM 8929 / NBRC 15157 / NCIMB 11770).